The primary structure comprises 586 residues: Aspartate--tRNA ligase (586 aa).

Glu-171 is an L-aspartate binding site. Positions 195 to 198 (QLFK) are aspartate. Residue Arg-217 coordinates L-aspartate. ATP is bound by residues 217–219 (RDE) and Gln-226. His-448 provides a ligand contact to L-aspartate. An ATP-binding site is contributed by Glu-482. Position 489 (Arg-489) interacts with L-aspartate. 534 to 537 (GLDR) contacts ATP.

The protein belongs to the class-II aminoacyl-tRNA synthetase family. Type 1 subfamily. As to quaternary structure, homodimer.

It is found in the cytoplasm. It carries out the reaction tRNA(Asp) + L-aspartate + ATP = L-aspartyl-tRNA(Asp) + AMP + diphosphate. Catalyzes the attachment of L-aspartate to tRNA(Asp) in a two-step reaction: L-aspartate is first activated by ATP to form Asp-AMP and then transferred to the acceptor end of tRNA(Asp). In Buchnera aphidicola subsp. Acyrthosiphon pisum (strain 5A), this protein is Aspartate--tRNA ligase.